The sequence spans 267 residues: Regulatory protein RecX (267 aa).

The protein belongs to the RecX family.

The protein resides in the cytoplasm. Modulates RecA activity. The protein is Regulatory protein RecX of Leuconostoc mesenteroides subsp. mesenteroides (strain ATCC 8293 / DSM 20343 / BCRC 11652 / CCM 1803 / JCM 6124 / NCDO 523 / NBRC 100496 / NCIMB 8023 / NCTC 12954 / NRRL B-1118 / 37Y).